We begin with the raw amino-acid sequence, 445 residues long: UPF0210 protein SSA_2018 (445 aa).

The protein belongs to the UPF0210 family. In terms of assembly, homodimer.

The chain is UPF0210 protein SSA_2018 from Streptococcus sanguinis (strain SK36).